Here is a 201-residue protein sequence, read N- to C-terminus: Small ribosomal subunit protein uS4 (201 aa).

The S4 RNA-binding domain occupies 91–151; the sequence is SRLDNVVYRA…DKSINTLPFE (61 aa).

It belongs to the universal ribosomal protein uS4 family. As to quaternary structure, part of the 30S ribosomal subunit. Contacts protein S5. The interaction surface between S4 and S5 is involved in control of translational fidelity.

One of the primary rRNA binding proteins, it binds directly to 16S rRNA where it nucleates assembly of the body of the 30S subunit. In terms of biological role, with S5 and S12 plays an important role in translational accuracy. The protein is Small ribosomal subunit protein uS4 of Mycolicibacterium gilvum (strain PYR-GCK) (Mycobacterium gilvum (strain PYR-GCK)).